The primary structure comprises 149 residues: 5-hydroxytryptamine receptor 1E (149 aa).

The Extracellular portion of the chain corresponds to 1–6; that stretch reads HQPANY. The chain crosses the membrane as a helical span at residues 7 to 31; the sequence is LICSLAVTDLLVAVLVMPLSIMYIV. The Cytoplasmic segment spans residues 32–39; that stretch reads MDSWRLGY. The chain crosses the membrane as a helical span at residues 40–65; that stretch reads FICEVWLSVDMTCCTCSILHLCVIAL. Cysteines 42 and 120 form a disulfide. D49 and C53 together coordinate serotonin. A DRY motif; important for ligand-induced conformation changes motif is present at residues 66–68; the sequence is DRY. Over 66 to 85 the chain is Extracellular; it reads DRYWAITNAIEYARKRTAKR. Residues 86–104 traverse the membrane as a helical segment; sequence AGLMILTVWTISIFISMPP. Topologically, residues 105–149 are cytoplasmic; that stretch reads LFWRSHRQLSPPPSQCAIQHDHVIYTIYSTLGAFYIPLTLILILY.

It belongs to the G-protein coupled receptor 1 family.

It localises to the cell membrane. Its function is as follows. G-protein coupled receptor for 5-hydroxytryptamine (serotonin). Also functions as a receptor for various alkaloids and psychoactive substances. Ligand binding causes a conformation change that triggers signaling via guanine nucleotide-binding proteins (G proteins) and modulates the activity of downstream effectors, such as adenylate cyclase. HTR1E is coupled to G(i)/G(o) G alpha proteins and mediates inhibitory neurotransmission by inhibiting adenylate cyclase activity. This chain is 5-hydroxytryptamine receptor 1E (HTR1E), found in Sus scrofa (Pig).